We begin with the raw amino-acid sequence, 367 residues long: Glycerol dehydrogenase (367 aa).

Residues Asp-37, Gly-94, Lys-95, Thr-116, and Ser-119 each contribute to the NAD(+) site. Residue Asp-121 coordinates glycerol. NAD(+) is bound by residues Ser-125, Leu-127, and Tyr-131. The Zn(2+) site is built by Asp-171, His-254, and His-271. Position 254 (His-254) interacts with glycerol.

This sequence belongs to the iron-containing alcohol dehydrogenase family. Zn(2+) is required as a cofactor.

It carries out the reaction glycerol + NAD(+) = dihydroxyacetone + NADH + H(+). Its pathway is polyol metabolism; glycerol fermentation; glycerone phosphate from glycerol (oxidative route): step 1/2. Catalyzes the NAD-dependent oxidation of glycerol to dihydroxyacetone (glycerone). Allows microorganisms to utilize glycerol as a source of carbon under anaerobic conditions. The protein is Glycerol dehydrogenase (gldA) of Escherichia coli O6:H1 (strain CFT073 / ATCC 700928 / UPEC).